The chain runs to 239 residues: Fatty acid metabolism regulator protein (239 aa).

Residues glutamine 6–phenylalanine 74 form the HTH gntR-type domain. A DNA-binding region (H-T-H motif) is located at residues glutamate 34–glutamine 53.

In terms of assembly, homodimer.

It localises to the cytoplasm. Its function is as follows. Multifunctional regulator of fatty acid metabolism. In Proteus mirabilis (strain HI4320), this protein is Fatty acid metabolism regulator protein.